The sequence spans 369 residues: S-adenosylmethionine decarboxylase proenzyme 2 (369 aa).

Residues E9 and E12 contribute to the active site. The active-site Schiff-base intermediate with substrate; via pyruvic acid is the S69. A Pyruvic acid (Ser); by autocatalysis modification is found at S69. C83 (proton donor; for catalytic activity) is an active-site residue. Active-site proton acceptor; for processing activity residues include S236 and H249.

It belongs to the eukaryotic AdoMetDC family. The cofactor is pyruvate. Is synthesized initially as an inactive proenzyme. Formation of the active enzyme involves a self-maturation process in which the active site pyruvoyl group is generated from an internal serine residue via an autocatalytic post-translational modification. Two non-identical subunits are generated from the proenzyme in this reaction, and the pyruvate is formed at the N-terminus of the alpha chain, which is derived from the carboxyl end of the proenzyme. The post-translation cleavage follows an unusual pathway, termed non-hydrolytic serinolysis, in which the side chain hydroxyl group of the serine supplies its oxygen atom to form the C-terminus of the beta chain, while the remainder of the serine residue undergoes an oxidative deamination to produce ammonia and the pyruvoyl group blocking the N-terminus of the alpha chain.

It carries out the reaction S-adenosyl-L-methionine + H(+) = S-adenosyl 3-(methylsulfanyl)propylamine + CO2. It participates in amine and polyamine biosynthesis; S-adenosylmethioninamine biosynthesis; S-adenosylmethioninamine from S-adenosyl-L-methionine: step 1/1. The chain is S-adenosylmethionine decarboxylase proenzyme 2 (SAMDC2) from Brassica juncea (Indian mustard).